Reading from the N-terminus, the 1055-residue chain is Error-prone DNA polymerase (1055 aa).

Belongs to the DNA polymerase type-C family. DnaE2 subfamily.

It localises to the cytoplasm. It carries out the reaction DNA(n) + a 2'-deoxyribonucleoside 5'-triphosphate = DNA(n+1) + diphosphate. DNA polymerase involved in damage-induced mutagenesis and translesion synthesis (TLS). It is not the major replicative DNA polymerase. This chain is Error-prone DNA polymerase, found in Corynebacterium glutamicum (strain ATCC 13032 / DSM 20300 / JCM 1318 / BCRC 11384 / CCUG 27702 / LMG 3730 / NBRC 12168 / NCIMB 10025 / NRRL B-2784 / 534).